We begin with the raw amino-acid sequence, 372 residues long: Glutamate 5-kinase (372 aa).

An ATP-binding site is contributed by Lys14. Residues Ser54, Asp141, and Asn153 each coordinate substrate. Residues 173-174 and 215-221 contribute to the ATP site; these read TD and TGGMLTK. Residues 280-358 form the PUA domain; it reads AGRLVLDDGA…RDIERLLGYV (79 aa).

This sequence belongs to the glutamate 5-kinase family.

Its subcellular location is the cytoplasm. It carries out the reaction L-glutamate + ATP = L-glutamyl 5-phosphate + ADP. It functions in the pathway amino-acid biosynthesis; L-proline biosynthesis; L-glutamate 5-semialdehyde from L-glutamate: step 1/2. Catalyzes the transfer of a phosphate group to glutamate to form L-glutamate 5-phosphate. This Laribacter hongkongensis (strain HLHK9) protein is Glutamate 5-kinase.